The chain runs to 155 residues: Regulatory protein RecX (155 aa).

Belongs to the RecX family.

Its subcellular location is the cytoplasm. In terms of biological role, modulates RecA activity. The chain is Regulatory protein RecX from Pseudomonas fluorescens (strain ATCC BAA-477 / NRRL B-23932 / Pf-5).